Consider the following 533-residue polypeptide: Hydroxylamine reductase (533 aa).

Cys-3, Cys-6, Cys-15, and Cys-21 together coordinate [4Fe-4S] cluster. The hybrid [4Fe-2O-2S] cluster site is built by His-234, Glu-258, Cys-302, Cys-389, Cys-417, Cys-442, Glu-476, and Lys-478. Cys-389 is modified (cysteine persulfide).

Belongs to the HCP family. Requires [4Fe-4S] cluster as cofactor. The cofactor is hybrid [4Fe-2O-2S] cluster.

It localises to the cytoplasm. It catalyses the reaction A + NH4(+) + H2O = hydroxylamine + AH2 + H(+). Its function is as follows. Catalyzes the reduction of hydroxylamine to form NH(3) and H(2)O. The chain is Hydroxylamine reductase from Maridesulfovibrio salexigens (strain ATCC 14822 / DSM 2638 / NCIMB 8403 / VKM B-1763) (Desulfovibrio salexigens).